The sequence spans 395 residues: Succinyl-diaminopimelate desuccinylase (395 aa).

Zn(2+) is bound at residue histidine 74. The active site involves aspartate 76. Aspartate 107 lines the Zn(2+) pocket. Catalysis depends on glutamate 141, which acts as the Proton acceptor. Residues glutamate 142, glutamate 170, and histidine 368 each contribute to the Zn(2+) site.

This sequence belongs to the peptidase M20A family. DapE subfamily. As to quaternary structure, homodimer. The cofactor is Zn(2+). It depends on Co(2+) as a cofactor.

The catalysed reaction is N-succinyl-(2S,6S)-2,6-diaminopimelate + H2O = (2S,6S)-2,6-diaminopimelate + succinate. The protein operates within amino-acid biosynthesis; L-lysine biosynthesis via DAP pathway; LL-2,6-diaminopimelate from (S)-tetrahydrodipicolinate (succinylase route): step 3/3. In terms of biological role, catalyzes the hydrolysis of N-succinyl-L,L-diaminopimelic acid (SDAP), forming succinate and LL-2,6-diaminopimelate (DAP), an intermediate involved in the bacterial biosynthesis of lysine and meso-diaminopimelic acid, an essential component of bacterial cell walls. In Brucella abortus (strain S19), this protein is Succinyl-diaminopimelate desuccinylase.